The sequence spans 239 residues: 2,3,4,5-tetrahydropyridine-2,6-dicarboxylate N-acetyltransferase (239 aa).

The protein belongs to the transferase hexapeptide repeat family. DapH subfamily.

It catalyses the reaction (S)-2,3,4,5-tetrahydrodipicolinate + acetyl-CoA + H2O = L-2-acetamido-6-oxoheptanedioate + CoA. It functions in the pathway amino-acid biosynthesis; L-lysine biosynthesis via DAP pathway; LL-2,6-diaminopimelate from (S)-tetrahydrodipicolinate (acetylase route): step 1/3. Its function is as follows. Catalyzes the transfer of an acetyl group from acetyl-CoA to tetrahydrodipicolinate. The protein is 2,3,4,5-tetrahydropyridine-2,6-dicarboxylate N-acetyltransferase of Staphylococcus aureus (strain JH9).